The chain runs to 580 residues: Fumarate hydratase class I, aerobic (580 aa).

[4Fe-4S] cluster contacts are provided by cysteine 105, cysteine 224, and cysteine 318.

The protein belongs to the class-I fumarase family. Homodimer. The cofactor is [4Fe-4S] cluster.

The catalysed reaction is (S)-malate = fumarate + H2O. The enzyme catalyses oxaloacetate = enol-oxaloacetate. It functions in the pathway carbohydrate metabolism; tricarboxylic acid cycle; (S)-malate from fumarate: step 1/1. Catalyzes the reversible hydration of fumarate to (S)-malate. Functions as an aerobic enzyme in the direction of malate formation as part of the citric acid cycle. Accounts for about 80% of the fumarase activity when the bacteria grow aerobically. To a lesser extent, also displays D-tartrate dehydratase activity in vitro, but is not able to convert (R)-malate, L-tartrate or meso-tartrate. Can also catalyze the isomerization of enol- to keto-oxaloacetate. This chain is Fumarate hydratase class I, aerobic, found in Salmonella typhimurium (strain LT2 / SGSC1412 / ATCC 700720).